A 532-amino-acid chain; its full sequence is Bifunctional purine biosynthesis protein PurH (532 aa).

The MGS-like domain maps to 1 to 149; the sequence is MTDPAPLTRA…KNHGAVTVLT (149 aa).

It belongs to the PurH family.

The enzyme catalyses (6R)-10-formyltetrahydrofolate + 5-amino-1-(5-phospho-beta-D-ribosyl)imidazole-4-carboxamide = 5-formamido-1-(5-phospho-D-ribosyl)imidazole-4-carboxamide + (6S)-5,6,7,8-tetrahydrofolate. It carries out the reaction IMP + H2O = 5-formamido-1-(5-phospho-D-ribosyl)imidazole-4-carboxamide. Its pathway is purine metabolism; IMP biosynthesis via de novo pathway; 5-formamido-1-(5-phospho-D-ribosyl)imidazole-4-carboxamide from 5-amino-1-(5-phospho-D-ribosyl)imidazole-4-carboxamide (10-formyl THF route): step 1/1. It participates in purine metabolism; IMP biosynthesis via de novo pathway; IMP from 5-formamido-1-(5-phospho-D-ribosyl)imidazole-4-carboxamide: step 1/1. The chain is Bifunctional purine biosynthesis protein PurH from Jannaschia sp. (strain CCS1).